The chain runs to 241 residues: Demethylmenaquinone methyltransferase (241 aa).

S-adenosyl-L-methionine is bound by residues Thr60, Asp81, and 106 to 107; that span reads DA.

Belongs to the class I-like SAM-binding methyltransferase superfamily. MenG/UbiE family.

The catalysed reaction is a 2-demethylmenaquinol + S-adenosyl-L-methionine = a menaquinol + S-adenosyl-L-homocysteine + H(+). Its pathway is quinol/quinone metabolism; menaquinone biosynthesis; menaquinol from 1,4-dihydroxy-2-naphthoate: step 2/2. Methyltransferase required for the conversion of demethylmenaquinol (DMKH2) to menaquinol (MKH2). The chain is Demethylmenaquinone methyltransferase from Staphylococcus epidermidis (strain ATCC 35984 / DSM 28319 / BCRC 17069 / CCUG 31568 / BM 3577 / RP62A).